Consider the following 191-residue polypeptide: Fe/S biogenesis protein NfuA (191 aa).

The [4Fe-4S] cluster site is built by cysteine 149 and cysteine 152.

This sequence belongs to the NfuA family. As to quaternary structure, homodimer. [4Fe-4S] cluster serves as cofactor.

Functionally, involved in iron-sulfur cluster biogenesis. Binds a 4Fe-4S cluster, can transfer this cluster to apoproteins, and thereby intervenes in the maturation of Fe/S proteins. Could also act as a scaffold/chaperone for damaged Fe/S proteins. The protein is Fe/S biogenesis protein NfuA of Yersinia pseudotuberculosis serotype O:1b (strain IP 31758).